Consider the following 354-residue polypeptide: G protein alpha o subunit (354 aa).

G2 carries N-myristoyl glycine lipidation. The S-palmitoyl cysteine moiety is linked to residue C3. A G-alpha domain is found at 32-354 (KDIKLLLLGA…ANNLRGCGLY (323 aa)). The tract at residues 35–48 (KLLLLGAGESGKST) is G1 motif. Residues 40-47 (GAGESGKS), 176-182 (LRTRVKT), 201-205 (DVGGQ), 270-273 (NKKD), and A326 contribute to the GTP site. Positions 47 and 182 each coordinate Mg(2+). The G2 motif stretch occupies residues 174 to 182 (DILRTRVKT). A G3 motif region spans residues 197–206 (FKLFDVGGQR). Residues 266 to 273 (ILFLNKKD) are G4 motif. Residues 324–329 (TCATDT) are G5 motif.

It belongs to the G-alpha family. G(i/o/t/z) subfamily. In terms of assembly, g proteins are composed of 3 units; alpha, beta and gamma. The alpha chain contains the guanine nucleotide binding site. In terms of tissue distribution, expressed primarily in neuronal cell bodies in the brain, optic lobe, and thoracic and abdominal ganglia. Also expressed in antenna, oocytes and ovarian nurse cells.

Functionally, guanine nucleotide-binding proteins (G proteins) are involved as modulators or transducers in various transmembrane signaling systems. Plays a role in glial cell differentiation during embryogenesis; loco, Galphai and the G-protein coupled receptor, moody, are required in the surface glia to achieve effective insulation of the nerve cord. The protein is G protein alpha o subunit (Galphao) of Drosophila melanogaster (Fruit fly).